A 327-amino-acid polypeptide reads, in one-letter code: Expansin-B7 (327 aa).

An N-terminal signal peptide occupies residues 1–30; sequence MAGRSRRRSFWSVGVAAALLCLLAAHGCSA. The disordered stretch occupies residues 30 to 88; it reads AKHHKPKPTPGGISGNASSSSSNSSTPSIPPPVAPTPTAPTPPIPSPGTGSSNGSSGGG. The segment covering 44–56 has biased composition (low complexity); the sequence is GNASSSSSNSSTP. Asn-45 and Asn-52 each carry an N-linked (GlcNAc...) asparagine glycan. Residues 57-75 show a composition bias toward pro residues; it reads SIPPPVAPTPTAPTPPIPS. The N-linked (GlcNAc...) asparagine glycan is linked to Asn-82. An Expansin-like EG45 domain is found at 112-218; that stretch reads GGACGFKNVN…RRVPCQYPGL (107 aa). 3 disulfide bridges follow: Cys-115–Cys-143, Cys-146–Cys-213, and Cys-151–Cys-157. One can recognise an Expansin-like CBD domain in the interval 231 to 322; it reads VYMAILVEYE…DWQPNTVYSS (92 aa). Residue Asn-298 is glycosylated (N-linked (GlcNAc...) asparagine).

This sequence belongs to the expansin family. Expansin B subfamily.

Its subcellular location is the secreted. The protein resides in the cell wall. The protein localises to the membrane. Functionally, may cause loosening and extension of plant cell walls by disrupting non-covalent bonding between cellulose microfibrils and matrix glucans. No enzymatic activity has been found. May be required for rapid internodal elongation in deepwater rice during submergence. The chain is Expansin-B7 (EXPB7) from Oryza sativa subsp. japonica (Rice).